A 45-amino-acid chain; its full sequence is Large ribosomal subunit protein bL34c (45 aa).

The protein belongs to the bacterial ribosomal protein bL34 family.

Its subcellular location is the plastid. It localises to the chloroplast. The polypeptide is Large ribosomal subunit protein bL34c (Emiliania huxleyi (Coccolithophore)).